The primary structure comprises 460 residues: Putative E3 ubiquitin-protein ligase RING1b (460 aa).

The disordered stretch occupies residues 1–85 (MPSLKSFSAA…SQSSSAGELS (85 aa)). Basic and acidic residues predominate over residues 21–31 (SEAERFNPEAV). 2 stretches are compositionally biased toward acidic residues: residues 32–51 (EKEEDPDKMDEKDESGDEED) and 59–71 (EAEDEEALGEEED). The RING-type zinc-finger motif lies at 103–143 (CSICLGIIRKTRTVMECLHRFCRECIDKSMRLGNNECPTCR). The segment at 196–300 (QVSQRQSKAL…TEQTHQRDSR (105 aa)) is disordered. The span at 220-234 (RSRRSGGGSRRRRNC) shows a compositional bias: basic residues. Over residues 240-249 (DTSEANDDDD) the composition is skewed to acidic residues. Over residues 250–265 (QNKRGKDSSSDEPCER) the composition is skewed to basic and acidic residues. A compositionally biased stretch (low complexity) spans 276 to 290 (SSSNANNNDNCAGNG).

Heterodimer with RING1A. Interacts with CLF. Component of the PRC1-like complex, at least composed of RING1A, RING1B and LHP1.

The protein localises to the nucleus. The catalysed reaction is S-ubiquitinyl-[E2 ubiquitin-conjugating enzyme]-L-cysteine + [acceptor protein]-L-lysine = [E2 ubiquitin-conjugating enzyme]-L-cysteine + N(6)-ubiquitinyl-[acceptor protein]-L-lysine.. Its pathway is protein modification; protein ubiquitination. Putative E3 ubiquitin-protein ligase that mediates monoubiquitination of 'Lys-119' of histone H2A (H2AK119ub), thereby playing a central role in histone code and gene regulation. Its function is as follows. As part of the PRC1-like complex, repress class I KNOX gene expression. PcG PRC1 complex maintains the transcriptionally repressive state of many genes, including Hox genes, throughout development. PcG PRC1 complex acts via chromatin remodeling and modification of histones, rendering chromatin heritably changed in its expressibility. The polypeptide is Putative E3 ubiquitin-protein ligase RING1b (RING1B) (Arabidopsis thaliana (Mouse-ear cress)).